We begin with the raw amino-acid sequence, 632 residues long: MEETQDSSSSKPKNTDENFSLWIEQYFNHKCCITFLTGCYSCQWQYREWEKTELGSCCCSRKEQFFYMCLVIAFILSVLFLFVWVETSNEYNGFDWVVYLGTGCWFFWSILVLSAAGIMVAYTTLLLLLGFLLLWERIELNLHTSHKVFICLVIVLCSFLLAVLSHFWKDKWLIAGLSLQIFAPFVHLSLITVMIIISWPLSICVARLESEVKVRRYRMADYEQEIQERCNVFQRLRALQIAAGLSFLIILLCLYLMPLGIYSPCILKKENLGPKPTLFGHRGAPMLAPENTMMSFEKAVELDVSGLETDIYLSFDSVPFLMHDYDLTRTTNIKEVLPSAAGNHTSNFNWTFLSTLNAGKWFLKHKPFFGMKPLSEADKRRAGNQSIPQLSELLALAKREQKIVIFDLFGPRPGHPLRNTFVRRVVKVILDSKIEQRLIFWLPGFDRDYVRFMAPGFQHVGRLWSIKDLTKHNITIINVDYKRLFYAGLRDYKEAKIYIHVYVINEPWLFSLAWCSSINSVTTDNIELLNQLSRPLFFMTPGFYMFMWLFLDIASAVIIGFVFCYNWIKEIKRERWLEAAASSGLLHSETITDITENNDASQQKPEVAPTSANLAPENMIELQKTEPKTENL.

Over 1 to 64 (MEETQDSSSS…GSCCCSRKEQ (64 aa)) the chain is Cytoplasmic. A helical transmembrane segment spans residues 65-85 (FFYMCLVIAFILSVLFLFVWV). The Extracellular portion of the chain corresponds to 86–114 (ETSNEYNGFDWVVYLGTGCWFFWSILVLS). Residues 115–135 (AAGIMVAYTTLLLLLGFLLLW) form a helical membrane-spanning segment. Topologically, residues 136–147 (ERIELNLHTSHK) are cytoplasmic. A helical membrane pass occupies residues 148–168 (VFICLVIVLCSFLLAVLSHFW). Over 169 to 180 (KDKWLIAGLSLQ) the chain is Extracellular. The helical transmembrane segment at 181 to 201 (IFAPFVHLSLITVMIIISWPL) threads the bilayer. At 202 to 240 (SICVARLESEVKVRRYRMADYEQEIQERCNVFQRLRALQ) the chain is on the cytoplasmic side. Residues 241-261 (IAAGLSFLIILLCLYLMPLGI) form a helical membrane-spanning segment. Residues 262 to 542 (YSPCILKKEN…SRPLFFMTPG (281 aa)) lie on the Extracellular side of the membrane. Positions 276–533 (PTLFGHRGAP…DNIELLNQLS (258 aa)) constitute a GP-PDE domain. 3 residues coordinate a divalent metal cation: glutamate 308, aspartate 310, and histidine 323. N-linked (GlcNAc...) asparagine glycosylation is found at asparagine 343, asparagine 349, asparagine 384, and asparagine 473. A helical transmembrane segment spans residues 543-563 (FYMFMWLFLDIASAVIIGFVF). At 564–632 (CYNWIKEIKR…QKTEPKTENL (69 aa)) the chain is on the cytoplasmic side. Residues 596–632 (ENNDASQQKPEVAPTSANLAPENMIELQKTEPKTENL) form a disordered region. The segment covering 623-632 (QKTEPKTENL) has biased composition (basic and acidic residues).

Belongs to the glycerophosphoryl diester phosphodiesterase family. In terms of tissue distribution, detected in testis, in particular in spermatocytes.

The protein resides in the cytoplasm. It is found in the membrane. This chain is Glycerophosphodiester phosphodiesterase domain-containing protein 4 (Gdpd4), found in Mus musculus (Mouse).